The primary structure comprises 129 residues: Small ribosomal subunit protein uS8 (129 aa).

Belongs to the universal ribosomal protein uS8 family. As to quaternary structure, part of the 30S ribosomal subunit.

Functionally, one of the primary rRNA binding proteins, it binds directly to 16S rRNA central domain where it helps coordinate assembly of the platform of the 30S subunit. In Nanoarchaeum equitans (strain Kin4-M), this protein is Small ribosomal subunit protein uS8.